The sequence spans 200 residues: 3-isopropylmalate dehydratase small subunit (200 aa).

Belongs to the LeuD family. LeuD type 1 subfamily. As to quaternary structure, heterodimer of LeuC and LeuD.

The enzyme catalyses (2R,3S)-3-isopropylmalate = (2S)-2-isopropylmalate. Its pathway is amino-acid biosynthesis; L-leucine biosynthesis; L-leucine from 3-methyl-2-oxobutanoate: step 2/4. Functionally, catalyzes the isomerization between 2-isopropylmalate and 3-isopropylmalate, via the formation of 2-isopropylmaleate. The polypeptide is 3-isopropylmalate dehydratase small subunit (Proteus mirabilis (strain HI4320)).